Consider the following 345-residue polypeptide: MRLSDFDYELPEELVAQEPVTPRDASRLLVLPREGAAEHRAFTDLPDLLAPGDLLVFNDTKVIPARLVGTKPTGGKVELLLCEPLGGGLGSRWRAMGQASKPIREGTTLLFEGLEARVEASEGEGFYVVTLDREGEALEAALARAGRIPLPPYIRRAPSDVDRERYQTIWARAPGSAAAPTAGLHFTEAILARLAARGVERTAVTLHVGPGTFLPVRGDSVEGHRMHAEQYEVRPEAAAAIAACRARGSRVVAVGTTSVRTLESAWRGGAVAAGAGRTALFVRPGHAFRAVDALVTNFHLPRSTLLMLVCAFGGTHRVLAAYRDAVARRYRFFSYGDAMLLARAD.

This sequence belongs to the QueA family. As to quaternary structure, monomer.

The protein resides in the cytoplasm. It catalyses the reaction 7-aminomethyl-7-carbaguanosine(34) in tRNA + S-adenosyl-L-methionine = epoxyqueuosine(34) in tRNA + adenine + L-methionine + 2 H(+). It participates in tRNA modification; tRNA-queuosine biosynthesis. Transfers and isomerizes the ribose moiety from AdoMet to the 7-aminomethyl group of 7-deazaguanine (preQ1-tRNA) to give epoxyqueuosine (oQ-tRNA). In Anaeromyxobacter sp. (strain Fw109-5), this protein is S-adenosylmethionine:tRNA ribosyltransferase-isomerase.